We begin with the raw amino-acid sequence, 397 residues long: Vacuolar protein sorting-associated protein 37A (397 aa).

Positions M1–L22 are disordered. A Phosphoserine modification is found at S18. The VPS37 C-terminal domain occupies K308–L397.

Belongs to the VPS37 family. As to quaternary structure, component of the ESCRT-I complex (endosomal sorting complex required for transport I) which consists of TSG101, VPS28, a VPS37 protein (VPS37A to -D) and MVB12A or MVB12B in a 1:1:1:1 stoichiometry. Interacts with TSG101, VPS28 and HGS. Component of an ESCRT-I complex (endosomal sorting complex required for transport I) which consists of TSG101, VPS28, VPS37A and UBAP1 in a 1:1:1:1 stoichiometry. As to expression, widely expressed. Examined tissues include heart, brain, placenta, liver, skeletal muscle, kidney and pancreas. More abundant in liver. Strongly decreased or undetected in hepatomas.

The protein resides in the late endosome membrane. It localises to the nucleus. Functionally, component of the ESCRT-I complex, a regulator of vesicular trafficking process. Required for the sorting of endocytic ubiquitinated cargos into multivesicular bodies. May be involved in cell growth and differentiation. This chain is Vacuolar protein sorting-associated protein 37A (VPS37A), found in Homo sapiens (Human).